A 295-amino-acid chain; its full sequence is Biliverdin reductase A (295 aa).

The propeptide occupies Met1 to Ser2. NAD(+)-binding positions include Arg18–Ala19, Ser76–His79, and Tyr97. The residue at position 154 (Ser154) is a Phosphoserine. Ser167 is an NAD(+) binding site. Position 173 is a phosphothreonine (Thr173). Residues Ser177 and Ser229 each carry the phosphoserine modification. An N6-acetyllysine mark is found at Lys247 and Lys252. Zn(2+)-binding residues include His279, Cys280, Cys291, and His292.

The protein belongs to the Gfo/Idh/MocA family. Biliverdin reductase subfamily. Monomer. It depends on Zn(2+) as a cofactor.

Its subcellular location is the cytoplasm. The protein localises to the cytosol. The catalysed reaction is (4Z,15Z)-bilirubin IXalpha + NAD(+) = biliverdin IXalpha + NADH + H(+). The enzyme catalyses (4Z,15Z)-bilirubin IXalpha + NADP(+) = biliverdin IXalpha + NADPH + H(+). The protein operates within porphyrin-containing compound metabolism; protoheme degradation. Reduces the gamma-methene bridge of the open tetrapyrrole, biliverdin IXalpha, to bilirubin with the concomitant oxidation of a NADH or NADPH cofactor. Does not reduce bilirubin IXbeta. Uses the reactants NADH or NADPH depending on the pH; NADH is used at the acidic pH range (6-6.9) and NADPH at the alkaline range (8.5-8.7). NADPH, however, is the probable reactant in biological systems. The protein is Biliverdin reductase A of Mus musculus (Mouse).